Consider the following 221-residue polypeptide: MSYGRPPPDVEGMTSLKVDNLTYRTSPDTLRRVFEKYGRVGDVYIPRDRYTKESRGFAFVRFHDKRDAEDAMDAMDGAVLDGRELRVQMARYGRPPDSHHSRRGPPPRRYGGGGYGRRSRSPRRRRRSRSRSRSRSRSRSRSRYSRSKSRSRTRSRSRSTSKSRSARRSKSKSSSVSRSRSRSRSRSRSRSPPPVSKRESKSRSRSKSPPKSPEEEGAVSS.

At serine 2 the chain carries N-acetylserine. The residue at position 2 (serine 2) is a Phosphoserine. The region spanning 14–92 (TSLKVDNLTY…RELRVQMARY (79 aa)) is the RRM domain. 2 positions are modified to phosphothreonine: threonine 22 and threonine 25. A Phosphoserine modification is found at serine 26. At lysine 52 the chain carries N6-acetyllysine. The tract at residues 92–221 (YGRPPDSHHS…SPEEEGAVSS (130 aa)) is disordered. 2 stretches are compositionally biased toward basic residues: residues 117–171 (RRSR…RSKS) and 179–189 (SRSRSRSRSRS). 7 positions are modified to phosphoserine: serine 189, serine 191, serine 204, serine 206, serine 208, serine 212, and serine 220.

This sequence belongs to the splicing factor SR family. Interacts with CCNL1 and CCNL2. Interacts with SCAF11. Interacts with ZRSR2/U2AF1-RS2. Interacts with CCDC55 (via C-terminus). In vitro, self-associates and binds SRSF1/SFRS1 (ASF/SF2), SNRNP70 and U2AF1 but not U2AF2. Binds SREK1/SFRS12. Interacts with BRDT. Post-translationally, extensively phosphorylated on serine residues in the RS domain. Phosphorylated by SRPK2 and this causes its redistribution from the nuclear speckle to nucleoplasm and controls cell fate decision in response to cisplatin treatment. KAT5/TIP60 inhibits its phosphorylation by preventing SRPK2 nuclear translocation. Acetylation on Lys-52 by KAT5/TIP60 promotes its proteasomal degradation. This effect is counterbalanced by HDAC6, which positively controls SRSF2 protein level by deacetylating it and preventing its proteasomal degradation. In terms of tissue distribution, expressed in all the tissues examined; liver, kidney, spleen, heart, lung and brain.

It is found in the nucleus. It localises to the nucleoplasm. Its subcellular location is the nucleus speckle. Necessary for the splicing of pre-mRNA. It is required for formation of the earliest ATP-dependent splicing complex and interacts with spliceosomal components bound to both the 5'- and 3'-splice sites during spliceosome assembly. It also is required for ATP-dependent interactions of both U1 and U2 snRNPs with pre-mRNA. Can bind to the myelin basic protein (MBP) gene MB3 regulatory region and increase transcription of the mbp promoter in cells derived from the CNS. The phosphorylated form (by SRPK2) is required for cellular apoptosis in response to cisplatin treatment. The protein is Serine/arginine-rich splicing factor 2 (Srsf2) of Mus musculus (Mouse).